We begin with the raw amino-acid sequence, 407 residues long: Imidazolonepropionase (407 aa).

Positions 73 and 75 each coordinate Fe(3+). Residues His73 and His75 each coordinate Zn(2+). The 4-imidazolone-5-propanoate site is built by Arg82, Tyr145, and His178. Residue Tyr145 coordinates N-formimidoyl-L-glutamate. Fe(3+) is bound at residue His243. Zn(2+) is bound at residue His243. Gln246 is a binding site for 4-imidazolone-5-propanoate. Asp318 serves as a coordination point for Fe(3+). Residue Asp318 participates in Zn(2+) binding. The N-formimidoyl-L-glutamate site is built by Asn320 and Gly322. A 4-imidazolone-5-propanoate-binding site is contributed by Thr323.

This sequence belongs to the metallo-dependent hydrolases superfamily. HutI family. Requires Zn(2+) as cofactor. It depends on Fe(3+) as a cofactor.

The protein localises to the cytoplasm. The enzyme catalyses 4-imidazolone-5-propanoate + H2O = N-formimidoyl-L-glutamate. Its pathway is amino-acid degradation; L-histidine degradation into L-glutamate; N-formimidoyl-L-glutamate from L-histidine: step 3/3. Catalyzes the hydrolytic cleavage of the carbon-nitrogen bond in imidazolone-5-propanoate to yield N-formimidoyl-L-glutamate. It is the third step in the universal histidine degradation pathway. The polypeptide is Imidazolonepropionase (Serratia proteamaculans (strain 568)).